The chain runs to 62 residues: Antitoxin VbhA (62 aa).

Residues 20 to 25 (SQRLEG) carry the Inhibitory (S/T)XXXE(G/N) motif motif. Glu24 provides a ligand contact to ATP.

In terms of assembly, interacts with VbhT.

Its function is as follows. Antitoxin component of type II toxin-antitoxin (TA) system VbhT-VbhA. Acts by inhibiting the adenylyltransferase activity of VbhT; competes with ATP-binding and prevents productive ATP-binding to VbhT. The protein is Antitoxin VbhA of Bartonella schoenbuchensis (strain DSM 13525 / NCTC 13165 / R1).